An 883-amino-acid polypeptide reads, in one-letter code: Phosphoenolpyruvate carboxylase (883 aa).

Residues H138 and K546 contribute to the active site.

The protein belongs to the PEPCase type 1 family. Mg(2+) is required as a cofactor.

The enzyme catalyses oxaloacetate + phosphate = phosphoenolpyruvate + hydrogencarbonate. Functionally, forms oxaloacetate, a four-carbon dicarboxylic acid source for the tricarboxylic acid cycle. The polypeptide is Phosphoenolpyruvate carboxylase (Escherichia fergusonii (strain ATCC 35469 / DSM 13698 / CCUG 18766 / IAM 14443 / JCM 21226 / LMG 7866 / NBRC 102419 / NCTC 12128 / CDC 0568-73)).